The following is a 508-amino-acid chain: UDP-N-acetylmuramoylalanine--D-glutamate ligase (508 aa).

138-144 (GTNGKTT) contributes to the ATP binding site. A disordered region spans residues 294-314 (FDEPAPRRKKDAPPPTRAGGR).

The protein belongs to the MurCDEF family.

Its subcellular location is the cytoplasm. The enzyme catalyses UDP-N-acetyl-alpha-D-muramoyl-L-alanine + D-glutamate + ATP = UDP-N-acetyl-alpha-D-muramoyl-L-alanyl-D-glutamate + ADP + phosphate + H(+). Its pathway is cell wall biogenesis; peptidoglycan biosynthesis. Its function is as follows. Cell wall formation. Catalyzes the addition of glutamate to the nucleotide precursor UDP-N-acetylmuramoyl-L-alanine (UMA). The protein is UDP-N-acetylmuramoylalanine--D-glutamate ligase of Bordetella parapertussis (strain 12822 / ATCC BAA-587 / NCTC 13253).